The following is a 701-amino-acid chain: Pseudouridylate synthase PUS7L (701 aa).

The residue at position 79 (Ser79) is a Phosphoserine. Catalysis depends on Asp339, which acts as the Nucleophile. Positions 424–647 (GFVNYYGPQR…PGCYRQILKH (224 aa)) constitute a TRUD domain.

The protein belongs to the pseudouridine synthase TruD family.

The catalysed reaction is a uridine in mRNA = a pseudouridine in mRNA. Functionally, pseudouridine synthase that catalyzes pseudouridylation of mRNAs. This Homo sapiens (Human) protein is Pseudouridylate synthase PUS7L.